The following is a 180-amino-acid chain: Large ribosomal subunit protein uL6 (180 aa).

It belongs to the universal ribosomal protein uL6 family. As to quaternary structure, part of the 50S ribosomal subunit.

Its function is as follows. This protein binds to the 23S rRNA, and is important in its secondary structure. It is located near the subunit interface in the base of the L7/L12 stalk, and near the tRNA binding site of the peptidyltransferase center. This Mycoplasma capricolum subsp. capricolum (strain California kid / ATCC 27343 / NCTC 10154) protein is Large ribosomal subunit protein uL6.